A 343-amino-acid chain; its full sequence is D-alanine--D-alanine ligase (343 aa).

Residues 132-337 (KNLFSYHKIP…YPDLIDKLIE (206 aa)) form the ATP-grasp domain. 165–220 (DRFLGWPCFVKPANMGSSIGVSKVHSPGEVKKALEKGFYYDRKLIFEEFVEGREIE) serves as a coordination point for ATP. Residues Asp291, Glu304, and Asn306 each contribute to the Mg(2+) site.

It belongs to the D-alanine--D-alanine ligase family. The cofactor is Mg(2+). Mn(2+) serves as cofactor.

It localises to the cytoplasm. It catalyses the reaction 2 D-alanine + ATP = D-alanyl-D-alanine + ADP + phosphate + H(+). It participates in cell wall biogenesis; peptidoglycan biosynthesis. Cell wall formation. This is D-alanine--D-alanine ligase from Halothermothrix orenii (strain H 168 / OCM 544 / DSM 9562).